Consider the following 113-residue polypeptide: Transcription initiation factor IIA subunit 2 (113 aa).

It belongs to the TFIIA subunit 2 family. TFIIA is a heterodimer of the large unprocessed subunit 1 and a small subunit gamma. It was originally believed to be a heterotrimer of an alpha, a beta and a gamma subunit.

It is found in the nucleus. Its function is as follows. TFIIA is a component of the transcription machinery of RNA polymerase II and plays an important role in transcriptional activation. TFIIA in a complex with TBP mediates transcriptional activity. The protein is Transcription initiation factor IIA subunit 2 of Caenorhabditis elegans.